Here is a 523-residue protein sequence, read N- to C-terminus: Sialate O-acetylesterase (523 aa).

Residues 1–23 (MVAPGLVLGLVLPLILWADRSAG) form the signal peptide. N-linked (GlcNAc...) asparagine glycans are attached at residues Asn-107, Asn-138, Asn-267, Asn-290, Asn-401, and Asn-422.

Its subcellular location is the lysosome. It catalyses the reaction N-acetyl-9-O-acetylneuraminate + H2O = N-acetylneuraminate + acetate + H(+). The enzyme catalyses an Ac-O-9-sialoglycoconjugate + H2O = a sialoglycoconjugate + acetate + H(+). Catalyzes the removal of O-acetyl ester groups from position 9 of the free diacetylated sialate N-acetyl-9-O-acetylneuraminate (Neu5,9Ac2) in the cytosol and of the diacetylated sialate residues of sialylglycoconjugates in the lysosomes. Together with the sialate-O-acetyltransferase they regulate the balance of acetylated sialoglycoconjugates, key players in various processes such as cell-cell interactions, host-pathogen recognition, and tumor antigenicity. The polypeptide is Sialate O-acetylesterase (SIAE) (Pongo abelii (Sumatran orangutan)).